Here is a 296-residue protein sequence, read N- to C-terminus: Elongation factor Ts (296 aa).

Residues 82 to 85 (TDFV) form an involved in Mg(2+) ion dislocation from EF-Tu region.

This sequence belongs to the EF-Ts family.

It is found in the cytoplasm. In terms of biological role, associates with the EF-Tu.GDP complex and induces the exchange of GDP to GTP. It remains bound to the aminoacyl-tRNA.EF-Tu.GTP complex up to the GTP hydrolysis stage on the ribosome. The chain is Elongation factor Ts from Coxiella burnetii (strain CbuK_Q154) (Coxiella burnetii (strain Q154)).